The following is a 213-amino-acid chain: Orotidine 5'-phosphate decarboxylase (213 aa).

Substrate-binding positions include aspartate 9, lysine 31, 59 to 68 (DFKVADIPAT), serine 115, 166 to 176 (PGVGAQGGKIE), glycine 191, and arginine 192. The active-site Proton donor is the lysine 61.

This sequence belongs to the OMP decarboxylase family. Type 1 subfamily. As to quaternary structure, homodimer.

The catalysed reaction is orotidine 5'-phosphate + H(+) = UMP + CO2. The protein operates within pyrimidine metabolism; UMP biosynthesis via de novo pathway; UMP from orotate: step 2/2. In terms of biological role, catalyzes the decarboxylation of orotidine 5'-monophosphate (OMP) to uridine 5'-monophosphate (UMP). This Methanocaldococcus jannaschii (strain ATCC 43067 / DSM 2661 / JAL-1 / JCM 10045 / NBRC 100440) (Methanococcus jannaschii) protein is Orotidine 5'-phosphate decarboxylase.